Here is a 162-residue protein sequence, read N- to C-terminus: Large ribosomal subunit protein bL17 (162 aa).

Residues 126–162 (KKEEVKTKSRRGGKAKKAEPTTEAPANTTEETTDSAE) form a disordered region. The span at 146–155 (TTEAPANTTE) shows a compositional bias: low complexity.

Belongs to the bacterial ribosomal protein bL17 family. In terms of assembly, part of the 50S ribosomal subunit. Contacts protein L32.

This is Large ribosomal subunit protein bL17 from Flavobacterium psychrophilum (strain ATCC 49511 / DSM 21280 / CIP 103535 / JIP02/86).